The sequence spans 333 residues: HTH-type transcriptional regulator pepR1 (333 aa).

An HTH lacI-type domain is found at 6–60 (VTIYDVAREAKVSMATVSRVVNGNNNVRKETRDRVMEVIKRLHYQPNAVAQGLAS). Positions 8-27 (IYDVAREAKVSMATVSRVVN) form a DNA-binding region, H-T-H motif.

Transcriptional regulator of the pepQ gene for prolidase. This is HTH-type transcriptional regulator pepR1 (pepR1) from Lactobacillus delbrueckii subsp. lactis.